Consider the following 903-residue polypeptide: MVKELKVAEAYQGDVGRGIARIDPYTMEELGLKPGDVIEIEGPKGKAYAIVYRGFLEDAGKGIIRIDGYLRQNAGVAIGDRVKVKRVEIKEAKKVVLAPTQPIRFGPGFEDFVKRKILGQVLSKGSKVTIGVLGTALTFVVVSTTPAGPVRVTDFTHVELKEEPVSEIKETKVPDVTYEDIGGLKEEVKKVREMIELPMRHPELFEKLGIEPPKGVLLVGPPGTGKTLLAKAVANEAGANFYVINGPEIMSKYVGETEENLRKIFEEAEENAPSIIFIDEIDAIAPKRDEATGEVERRLVAQLLTLMDGLKGRGQVVVIGATNRPNALDPALRRPGRFDREIVIGVPDREGRKEILQIHTRNMPLAEDVDLDYLADVTHGFVGADLAALCKEAAMRALRRVLPSIDLEAEEIPKEVLDNLKVTMDDFKEALKDVEPSAMREVLVEVPNVKWEDIGGLEEVKQELREAVEWPLKAKEVFEKIGVRPPKGVLLFGPPGTGKTLLAKAVANESGANFISVKGPEIFSKWVGESEKAIREIFRKARQSAPCIIFFDEIDAIAPKRGRDLSSAVTDKVVNQLLTELDGMEEPKDVVVIAATNRPDIIDPALLRPGRLDRVILVPVPDEKARLDIFKIHTRSMNLAEDVNLEELAKKTEGYTGADIEALCREAAMLAVRESIGKPWDIEVKLRELINYLQSISGTFRAAAVELNSVIKATKERESAEAGEFSELKNAIGKIISVLSPAKEKIEAVEKEIDKFLEVINKEELKPSEKDEAQKLAKYLKDILGKLKEMIDNIYELENKLNTLKEQVSAEEIDEIIKTTQNIIQRFTTSLDELKNILKDIESIRLKVSTKDVKIKKEHFMKALEKIKPSVSKEDMRVYEKLAQEYGRATSVEKKKEEGKEVI.

Residues 220–227 and 493–500 contribute to the ATP site; these read GPPGTGKT.

This sequence belongs to the AAA ATPase family. CDC48 subfamily.

The protein is Cell division cycle protein 48 homolog MJ1156 of Methanocaldococcus jannaschii (strain ATCC 43067 / DSM 2661 / JAL-1 / JCM 10045 / NBRC 100440) (Methanococcus jannaschii).